The primary structure comprises 173 residues: Thiol-disulfide oxidoreductase ResA (173 aa).

Residues 10-29 form a helical; Signal-anchor for type II membrane protein membrane-spanning segment; sequence VIILLILCGAVGFTLYQGFF. Positions 35-173 constitute a Thioredoxin domain; sequence MQIGKEAPNF…LEGYLQKITP (139 aa). Cys-73 and Cys-76 are disulfide-bonded.

Belongs to the thioredoxin family. ResA subfamily.

Its subcellular location is the cell membrane. The protein operates within protein modification; cytochrome c assembly. In terms of biological role, thiol-disulfide oxidoreductase which is required in disulfide reduction during c-type cytochrome synthesis. May accept reducing equivalents from CcdA, leading to breakage of disulfide bonds in apocytochrome c; following this reduction heme can be covalently attached. This chain is Thiol-disulfide oxidoreductase ResA, found in Bacillus cereus (strain ZK / E33L).